The following is a 428-amino-acid chain: MNIAVVGLSHKTAPVEVREKLSIPEAKLEEVLAHLKSYPHIQEVAILSTCNRLEIYAVVTETEQGIIEISQFLSEKGHIPLHHLRRHLFILLHQDAVRHLMRVAAGLESLVLGEGQILAQVKNTHKLAQKYGGIGRLLDRLFKQAMTAGKRVRSETSIGTGAVSISSAAVELAQMKVIDICVCRVTIIGAGKMSRLLVQHLLSKGVSKIAIVNRSLRRAQELAGLFPEAQLQLHPLEEMINAVSVSDIVFTSTGATEPILNRSNLESIIAVNQSLMLVDISVPRNVDADVQQLEQIQSYNVDDLKAVVAANQESRRRLAQEAEGLLEEEVESFELWWRSLDTVPTISCLRDKVETIREQELEKALSRLGTEFAEKHQEVIEALTRGIVNKILHEPMVQLRAQQDIEARKRCLQSLQMLFDLDIEEQYT.

Substrate-binding positions include threonine 49–arginine 52, serine 109, glutamate 114–glutamine 116, and glutamine 120. The active-site Nucleophile is the cysteine 50. Glycine 189–serine 194 contributes to the NADP(+) binding site.

It belongs to the glutamyl-tRNA reductase family. As to quaternary structure, homodimer.

The enzyme catalyses (S)-4-amino-5-oxopentanoate + tRNA(Glu) + NADP(+) = L-glutamyl-tRNA(Glu) + NADPH + H(+). It participates in porphyrin-containing compound metabolism; protoporphyrin-IX biosynthesis; 5-aminolevulinate from L-glutamyl-tRNA(Glu): step 1/2. Its pathway is porphyrin-containing compound metabolism; chlorophyll biosynthesis. Catalyzes the NADPH-dependent reduction of glutamyl-tRNA(Glu) to glutamate 1-semialdehyde (GSA). This chain is Glutamyl-tRNA reductase, found in Gloeothece citriformis (strain PCC 7424) (Cyanothece sp. (strain PCC 7424)).